The primary structure comprises 75 residues: Conotoxin Vn5.6 (75 aa).

Positions 1–19 are cleaved as a signal peptide; it reads MLCLPVFIILLLLASPAAP. Residues 20–59 constitute a propeptide that is removed on maturation; it reads NPLEKRIQSDLIRAALEDADMKTGEREILNIIDSISDVAK. Position 60 is a pyrrolidone carboxylic acid (Q60).

This sequence belongs to the conotoxin T superfamily. Post-translationally, contains 2 disulfide bonds that can be either 'C1-C3, C2-C4' or 'C1-C4, C2-C3', since these disulfide connectivities have been observed for conotoxins with cysteine framework V (for examples, see AC P0DQQ7 and AC P81755). Expressed by the venom duct.

It localises to the secreted. This Conus ventricosus (Mediterranean cone) protein is Conotoxin Vn5.6.